A 343-amino-acid chain; its full sequence is N-acetyl-gamma-glutamyl-phosphate reductase (343 aa).

Cys-149 is an active-site residue.

The protein belongs to the NAGSA dehydrogenase family. Type 1 subfamily.

It is found in the cytoplasm. The enzyme catalyses N-acetyl-L-glutamate 5-semialdehyde + phosphate + NADP(+) = N-acetyl-L-glutamyl 5-phosphate + NADPH + H(+). It functions in the pathway amino-acid biosynthesis; L-arginine biosynthesis; N(2)-acetyl-L-ornithine from L-glutamate: step 3/4. Functionally, catalyzes the NADPH-dependent reduction of N-acetyl-5-glutamyl phosphate to yield N-acetyl-L-glutamate 5-semialdehyde. The chain is N-acetyl-gamma-glutamyl-phosphate reductase from Methanococcus maripaludis (strain C7 / ATCC BAA-1331).